We begin with the raw amino-acid sequence, 770 residues long: Arf-GAP with coiled-coil, ANK repeat and PH domain-containing protein 2 (770 aa).

The BAR domain maps to methionine 1–arginine 226. The PH domain maps to glycine 266–alanine 361. The segment at serine 371 to serine 391 is disordered. The segment covering serine 379–glycine 388 has biased composition (polar residues). Phosphoserine occurs at positions 384 and 387. The Arf-GAP domain occupies glutamate 399 to leucine 520. The C4-type zinc-finger motif lies at cysteine 414–cysteine 437. Serine 521 carries the phosphoserine modification. Positions alanine 542–valine 572 are disordered. A compositionally biased stretch (polar residues) spans valine 550–serine 561. Phosphoserine occurs at positions 573 and 576. ANK repeat units follow at residues asparagine 632 to glutamine 661, glutamine 665 to alanine 694, and glutamate 698 to methionine 727. The residue at position 734 (tyrosine 734) is a Phosphotyrosine. The residue at position 767 (serine 767) is a Phosphoserine.

As to quaternary structure, interacts with RAB35 (GTP-bound form); the interaction is direct and probably recruits ACAP2 to membranes. Interacts with MICALL1; the interaction is indirect through RAB35.

It is found in the endosome membrane. The protein resides in the cell membrane. GAP activity stimulated by phosphatidylinositol 4,5-bisphosphate (PIP2) and phosphatidic acid. GTPase-activating protein (GAP) for ADP ribosylation factor 6 (ARF6). Doesn't show GAP activity for RAB35. The sequence is that of Arf-GAP with coiled-coil, ANK repeat and PH domain-containing protein 2 (Acap2) from Mus musculus (Mouse).